A 151-amino-acid chain; its full sequence is Molybdopterin synthase catalytic subunit (151 aa).

Residues 38–40 (KVR), 104–105 (HR), K120, and 127–129 (KRE) contribute to the substrate site.

It belongs to the MoaE family. As to quaternary structure, heterotetramer of 2 MoaD subunits and 2 MoaE subunits. Also stable as homodimer. The enzyme changes between these two forms during catalysis.

It carries out the reaction 2 [molybdopterin-synthase sulfur-carrier protein]-C-terminal-Gly-aminoethanethioate + cyclic pyranopterin phosphate + H2O = molybdopterin + 2 [molybdopterin-synthase sulfur-carrier protein]-C-terminal Gly-Gly + 2 H(+). It participates in cofactor biosynthesis; molybdopterin biosynthesis. Its function is as follows. Converts molybdopterin precursor Z into molybdopterin. This requires the incorporation of two sulfur atoms into precursor Z to generate a dithiolene group. The sulfur is provided by MoaD. This Yersinia pestis protein is Molybdopterin synthase catalytic subunit (moaE).